The sequence spans 249 residues: Leucyl/phenylalanyl-tRNA--protein transferase (249 aa).

Belongs to the L/F-transferase family.

Its subcellular location is the cytoplasm. It catalyses the reaction N-terminal L-lysyl-[protein] + L-leucyl-tRNA(Leu) = N-terminal L-leucyl-L-lysyl-[protein] + tRNA(Leu) + H(+). The enzyme catalyses N-terminal L-arginyl-[protein] + L-leucyl-tRNA(Leu) = N-terminal L-leucyl-L-arginyl-[protein] + tRNA(Leu) + H(+). The catalysed reaction is L-phenylalanyl-tRNA(Phe) + an N-terminal L-alpha-aminoacyl-[protein] = an N-terminal L-phenylalanyl-L-alpha-aminoacyl-[protein] + tRNA(Phe). Functionally, functions in the N-end rule pathway of protein degradation where it conjugates Leu, Phe and, less efficiently, Met from aminoacyl-tRNAs to the N-termini of proteins containing an N-terminal arginine or lysine. This is Leucyl/phenylalanyl-tRNA--protein transferase from Xanthomonas axonopodis pv. citri (strain 306).